The primary structure comprises 458 residues: UDP-N-acetylmuramoylalanine--D-glutamate ligase (458 aa).

124 to 130 (GSDGKTT) is a binding site for ATP.

The protein belongs to the MurCDEF family.

The protein resides in the cytoplasm. The enzyme catalyses UDP-N-acetyl-alpha-D-muramoyl-L-alanine + D-glutamate + ATP = UDP-N-acetyl-alpha-D-muramoyl-L-alanyl-D-glutamate + ADP + phosphate + H(+). It participates in cell wall biogenesis; peptidoglycan biosynthesis. Its function is as follows. Cell wall formation. Catalyzes the addition of glutamate to the nucleotide precursor UDP-N-acetylmuramoyl-L-alanine (UMA). The sequence is that of UDP-N-acetylmuramoylalanine--D-glutamate ligase from Clostridium botulinum (strain 657 / Type Ba4).